The primary structure comprises 660 residues: Solute carrier family 5 member 4B (660 aa).

At 1–27 (MASTLSPSITPQTEEPPVVPVRIQNAA) the chain is on the cytoplasmic side. A helical membrane pass occupies residues 28-48 (DISVIVIYFIVVLAVGLWSMV). The Extracellular segment spans residues 49–54 (RSNRGT). A helical transmembrane segment spans residues 55-75 (VGGFFLAGHDMAWWPMGASLF). At 76–82 (ASNIGSN) the chain is on the cytoplasmic side. The helical transmembrane segment at 83-103 (HFVGLAGTGAASGIAIAAVEW) threads the bilayer. At 104-105 (NA) the chain is on the extracellular side. The chain crosses the membrane as a helical span at residues 106–126 (LLMVLVLGWVFLPIYIKAGVL). Residues 127–142 (TMPEYLRKRFGGKRLQ) lie on the Cytoplasmic side of the membrane. Residues 143 to 163 (IYLSVLSLFIMVALQTSSIIF) traverse the membrane as a helical segment. Residues 164 to 166 (SGA) lie on the Extracellular side of the membrane. Residues 167–187 (IFIQLALGLNLYLAVFILLAI) form a helical membrane-spanning segment. Topologically, residues 188-208 (TAFYTVAGGLASVIYTDSVQT) are cytoplasmic. A helical membrane pass occupies residues 209–229 (FIMLLGSLILMGFAFAEVGGY). Residues 230–277 (ESFTEKYMNAIPSVVEGDNLTISPKCYTPQPDSFHVFRDPVTGDIPWP) lie on the Extracellular side of the membrane. The helical transmembrane segment at 278-298 (GLIFGMTILAIWYWCADQVIV) threads the bilayer. At 299-313 (QRCLCGKNMSHVKAA) the chain is on the cytoplasmic side. Residues 314-334 (CILCGYLKLLPMFLMVMPGMI) traverse the membrane as a helical segment. Over 335 to 380 (SRILYTDKVACVVPSECEKQCGTAVGCTNYAYPTLVLELMPDGLRG) the chain is Extracellular. Residues 381 to 401 (LMLSVMLASLMSSLTSIFNSA) traverse the membrane as a helical segment. Over 402–423 (STLFTIDLYTKIRKKASERELM) the chain is Cytoplasmic. Residues 424–444 (IAGRIFGMVLIAVSILWVPLV) form a helical membrane-spanning segment. Residues 445 to 455 (QVSQNGQLFHY) lie on the Extracellular side of the membrane. The chain crosses the membrane as a helical span at residues 456 to 476 (IGSVSSYLGPPLGAVFMLAIF). The Cytoplasmic portion of the chain corresponds to 477-484 (FKRVNEQG). A helical membrane pass occupies residues 485–505 (AFWGLMVGLVVGLIRLIAEFV). Residues 506–526 (YGTGSCVAPSNCPKIICGVHY) are Extracellular-facing. The chain crosses the membrane as a helical span at residues 527–547 (MYFAIILFFVSIIVILGVSFL). Residues 548 to 639 (TEPIPDVHLY…DTSEKPLWRT (92 aa)) lie on the Cytoplasmic side of the membrane. A helical membrane pass occupies residues 640–660 (VMNINAVLLLGVAVFVHAYFA).

The protein belongs to the sodium:solute symporter (SSF) (TC 2.A.21) family. Expressed in small intestine. Expressed in kidney.

The protein resides in the cell membrane. The enzyme catalyses D-glucose(out) + 2 Na(+)(out) = D-glucose(in) + 2 Na(+)(in). Inhibited by phlorizin. Functionally, low-affinity sodium/D-glucose symporter. Generates D-glucose-induced depolarization in a pH-independent manner. The protein is Solute carrier family 5 member 4B of Mus musculus (Mouse).